Consider the following 928-residue polypeptide: DNA mismatch repair protein MutS (928 aa).

613 to 620 contributes to the ATP binding site; it reads GPNMAGKS. Residues 854–872 show a composition bias toward basic and acidic residues; the sequence is KAKSNKDDHRIDEKTENSS. Positions 854–880 are disordered; the sequence is KAKSNKDDHRIDEKTENSSKKHKNKDS.

Belongs to the DNA mismatch repair MutS family.

This protein is involved in the repair of mismatches in DNA. It is possible that it carries out the mismatch recognition step. This protein has a weak ATPase activity. This is DNA mismatch repair protein MutS from Clostridium beijerinckii (strain ATCC 51743 / NCIMB 8052) (Clostridium acetobutylicum).